The following is a 252-amino-acid chain: tRNA (guanine-N(1)-)-methyltransferase (252 aa).

Residues glycine 113 and 133-138 contribute to the S-adenosyl-L-methionine site; that span reads IGDYVL. Low complexity predominate over residues 229 to 238; sequence VARPAANAPA. Residues 229 to 252 form a disordered region; it reads VARPAANAPAKGESQKTPKNKTDG. Basic and acidic residues predominate over residues 241 to 252; sequence ESQKTPKNKTDG.

It belongs to the RNA methyltransferase TrmD family. As to quaternary structure, homodimer.

Its subcellular location is the cytoplasm. The catalysed reaction is guanosine(37) in tRNA + S-adenosyl-L-methionine = N(1)-methylguanosine(37) in tRNA + S-adenosyl-L-homocysteine + H(+). Functionally, specifically methylates guanosine-37 in various tRNAs. The polypeptide is tRNA (guanine-N(1)-)-methyltransferase (Rhodopseudomonas palustris (strain HaA2)).